A 479-amino-acid chain; its full sequence is MSILVKNNIHWVGQRDWEVRDFHGTEYKTLRGSSYNSYLIREEKNVLIDTVDHKFSREFVQNLRSEIDLADIDYIIINHAEEDHAGALTELMAQIPDAPIYCTANAIDSINGHHHHPEWNFKVVKTGDTLDIGNGKQLIFVETPMLHWPDSMMTYMTGDAVLFSNDAFGQHYCDERLFNDEVDQTELFEQCQRYYANILTPFSRLVTPKITEILGFNLPVDMIATSHGVVWRDNPTQIVELYLKWAADYQEDRITIFYDTMSNNTRIMADAIAQGINEVDPNVAVKIFNVARSDKNEILTNVFRSKGVLVGTSTMNNVMMPKIAGLVEEMTGLRFRNKRASAFGSHGWSGGAVDRLSTRLQDAGFEMSLSLKAKWRPDLDALELCRQHGRDIARQWALAPLPETTQKTTPAEEITTCAAADLGPKMQCSVCQWIYDPALGEPLQDVAPGTPWSDVPDNFLCPECSLGKDVFDVLATEAK.

The interval leucine 30–isoleucine 210 is zinc metallo-hydrolase. Positions 79, 81, 83, 147, 166, and 227 each coordinate Fe cation. Residues isoleucine 254 to alanine 393 form the Flavodoxin-like domain. FMN is bound by residues threonine 260–asparagine 264 and alanine 342–leucine 369. The Rubredoxin-like domain maps to glycine 423–leucine 474. Positions 428, 431, 461, and 464 each coordinate Fe cation.

In the N-terminal section; belongs to the zinc metallo-hydrolase group 3 family. As to quaternary structure, homotetramer. Fe cation is required as a cofactor. The cofactor is FMN.

Its subcellular location is the cytoplasm. It participates in nitrogen metabolism; nitric oxide reduction. In terms of biological role, anaerobic nitric oxide reductase; uses NADH to detoxify nitric oxide (NO), protecting several 4Fe-4S NO-sensitive enzymes. Has at least 2 reductase partners, only one of which (NorW, flavorubredoxin reductase) has been identified. NO probably binds to the di-iron center; electrons enter from the NorW at rubredoxin and are transferred sequentially to the FMN center and the di-iron center. Also able to function as an aerobic oxygen reductase. This chain is Anaerobic nitric oxide reductase flavorubredoxin, found in Salmonella arizonae (strain ATCC BAA-731 / CDC346-86 / RSK2980).